The primary structure comprises 404 residues: S-adenosylmethionine synthase (404 aa).

His-16 serves as a coordination point for ATP. Asp-18 contacts Mg(2+). Glu-44 is a binding site for K(+). 2 residues coordinate L-methionine: Glu-57 and Gln-100. Residues Gln-100–Arg-110 are flexible loop. ATP-binding positions include Asp-177–Lys-179, Asp-257, Arg-263–Lys-264, Ala-280, and Lys-284. Asp-257 lines the L-methionine pocket. Residue Lys-288 coordinates L-methionine.

Belongs to the AdoMet synthase family. In terms of assembly, homotetramer; dimer of dimers. Mg(2+) is required as a cofactor. It depends on K(+) as a cofactor.

The protein localises to the cytoplasm. The catalysed reaction is L-methionine + ATP + H2O = S-adenosyl-L-methionine + phosphate + diphosphate. Its pathway is amino-acid biosynthesis; S-adenosyl-L-methionine biosynthesis; S-adenosyl-L-methionine from L-methionine: step 1/1. Functionally, catalyzes the formation of S-adenosylmethionine (AdoMet) from methionine and ATP. The overall synthetic reaction is composed of two sequential steps, AdoMet formation and the subsequent tripolyphosphate hydrolysis which occurs prior to release of AdoMet from the enzyme. In Bifidobacterium adolescentis (strain ATCC 15703 / DSM 20083 / NCTC 11814 / E194a), this protein is S-adenosylmethionine synthase.